The following is a 331-amino-acid chain: Ribosomal RNA small subunit methyltransferase H (331 aa).

Residues 56–58, Asp-76, Phe-100, Asp-122, and Gln-129 each bind S-adenosyl-L-methionine; that span reads GGH.

Belongs to the methyltransferase superfamily. RsmH family.

It is found in the cytoplasm. The catalysed reaction is cytidine(1402) in 16S rRNA + S-adenosyl-L-methionine = N(4)-methylcytidine(1402) in 16S rRNA + S-adenosyl-L-homocysteine + H(+). Its function is as follows. Specifically methylates the N4 position of cytidine in position 1402 (C1402) of 16S rRNA. In Chromohalobacter salexigens (strain ATCC BAA-138 / DSM 3043 / CIP 106854 / NCIMB 13768 / 1H11), this protein is Ribosomal RNA small subunit methyltransferase H.